The chain runs to 529 residues: Corneodesmosin (529 aa).

The signal sequence occupies residues 1-32 (MGSSRAPWMGRVGGHGMMALLLAGLLLPGTLA). Disordered stretches follow at residues 38-248 (FSDP…SVSG) and 383-492 (GSTG…SSAG). Composition is skewed to low complexity over residues 58-83 (GKGDSSGFSSYSGSSSSGSSISSARS), 90-100 (GSSSGSSIAQG), 111-175 (GYSQ…NGSA), 189-231 (PSQP…SGGP), 392-408 (SPSSSRVPSSSSISSSS), and 426-441 (PGTGSFSSSSSSQSSG). Residue N172 is glycosylated (N-linked (GlcNAc...) asparagine). Residues 449 to 467 (GSKSSSSGHPCMSVSSLTL) are compositionally biased toward polar residues.

Its subcellular location is the secreted. Its function is as follows. Important for the epidermal barrier integrity. In Pan troglodytes (Chimpanzee), this protein is Corneodesmosin (CDSN).